We begin with the raw amino-acid sequence, 413 residues long: Aspartate aminotransferase, cytoplasmic (413 aa).

2 residues coordinate L-aspartate: Gly-39 and Trp-141. Residue Ser-149 is modified to Phosphoserine. Asn-195 serves as a coordination point for L-aspartate. At Lys-259 the chain carries N6-(pyridoxal phosphate)lysine. Arg-387 contacts L-aspartate.

The protein belongs to the class-I pyridoxal-phosphate-dependent aminotransferase family. In terms of assembly, homodimer. Pyridoxal 5'-phosphate serves as cofactor.

The protein resides in the cytoplasm. The enzyme catalyses L-aspartate + 2-oxoglutarate = oxaloacetate + L-glutamate. It catalyses the reaction L-cysteine + 2-oxoglutarate = 2-oxo-3-sulfanylpropanoate + L-glutamate. It carries out the reaction (2S)-2-aminobutanoate + 2-oxoglutarate = 2-oxobutanoate + L-glutamate. The catalysed reaction is 3-sulfino-L-alanine + 2-oxoglutarate = 3-sulfinopyruvate + L-glutamate. Functionally, biosynthesis of L-glutamate from L-aspartate or L-cysteine. Important regulator of levels of glutamate, the major excitatory neurotransmitter of the vertebrate central nervous system. Acts as a scavenger of glutamate in brain neuroprotection. The aspartate aminotransferase activity is involved in hepatic glucose synthesis during development and in adipocyte glyceroneogenesis. Using L-cysteine as substrate, regulates levels of mercaptopyruvate, an important source of hydrogen sulfide. Mercaptopyruvate is converted into H(2)S via the action of 3-mercaptopyruvate sulfurtransferase (3MST). Hydrogen sulfide is an important synaptic modulator and neuroprotectant in the brain. The chain is Aspartate aminotransferase, cytoplasmic from Macaca fascicularis (Crab-eating macaque).